A 436-amino-acid polypeptide reads, in one-letter code: Cold sensitive U2 snRNA suppressor 1 (436 aa).

Positions 1-10 (MARTKSRKRS) are enriched in basic residues. Residues 1-22 (MARTKSRKRSGNNQNKNASVVN) are disordered. A compositionally biased stretch (low complexity) spans 12–22 (NNQNKNASVVN). Phosphothreonine is present on residues threonine 104 and threonine 112. Residue serine 114 is modified to Phosphoserine. Positions 374 to 436 (EFENSKEDTQ…SEKQLYTVLK (63 aa)) are disordered. Residues 389–408 (GRQDDKIDDEVEHKLDHFQE) are compositionally biased toward basic and acidic residues.

This sequence to mammalian SAP 145. Some, to C.elegans ZK632.11. Belongs to the CWC complex (or CEF1-associated complex), a spliceosome sub-complex reminiscent of a late-stage spliceosome composed of the U2, U5 and U6 snRNAs and at least BUD13, BUD31, BRR2, CDC40, CEF1, CLF1, CUS1, CWC2, CWC15, CWC21, CWC22, CWC23, CWC24, CWC25, CWC27, ECM2, HSH155, IST3, ISY1, LEA1, MSL1, NTC20, PRP8, PRP9, PRP11, PRP19, PRP21, PRP22, PRP45, PRP46, SLU7, SMB1, SMD1, SMD2, SMD3, SMX2, SMX3, SNT309, SNU114, SPP2, SYF1, SYF2, RSE1 and YJU2. Interacts with RDS3.

Its subcellular location is the nucleus. Essential splicing protein required for U2 snRNP binding to pre-mRNA during spliceosome assembly. This chain is Cold sensitive U2 snRNA suppressor 1 (CUS1), found in Saccharomyces cerevisiae (strain ATCC 204508 / S288c) (Baker's yeast).